Reading from the N-terminus, the 271-residue chain is ELH (271 aa).

A signal peptide spans 1 to 28; that stretch reads MKRPNNRPTNTMSLILCLTLSSLCVSSQ. Propeptides lie at residues 29-95 and 162-184; these read SASV…NEKR and AAGG…RRKR. Residues 162 to 190 are disordered; sequence AAGGMEQSEGQNPETESHSRRKRSVLTPS. Lys241 bears the Lysine amide mark.

Belongs to the molluscan ELH family. Bag cell neurons.

It localises to the secreted. In terms of biological role, ELH acts as a neurotransmitter locally, upon neurons of the abdominal ganglion and as a hormone by diffusing into the circulating hemolymph and modulating the activity of other organs. It specifically causes contraction of smooth muscle in the ovotestis and expulsion of the egg string. Alpha-BCP decreases the activity of a cluster of neurons in the left upper quadrant of the abdominal ganglion. Its function is as follows. Beta-BCP specifically excites 2 neurons, L1 and R1, in the abdominal ganglion. In Aplysia californica (California sea hare), this protein is ELH.